A 1130-amino-acid polypeptide reads, in one-letter code: Sodium/potassium/calcium exchanger 1 (1130 aa).

The Extracellular portion of the chain corresponds to 1-419 (MGKLIRMGTQ…DLFSVEDRRQ (419 aa)). A disordered region spans residues 104–209 (PSIAMEDTPN…SPTATVRDRE (106 aa)). Residues 125–136 (LKNSYSPTTAGT) are compositionally biased toward polar residues. Positions 170–187 (PRGERKNSSPTHAREKGR) are enriched in basic and acidic residues. 2 N-linked (GlcNAc...) asparagine glycosylation sites follow: Asn176 and Asn273. Residues 274–295 (ISTTPQGAVPQHTPATSEEQMT) are disordered. Residues 286–295 (TPATSEEQMT) show a composition bias toward polar residues. Residues 420 to 440 (GWVVLHIFGMMYVFVALAIVC) traverse the membrane as a helical segment. Residues 441–464 (DEYFVPALGVITHKLQISEDVAGA) are Cytoplasmic-facing. The Alpha-1 repeat unit spans residues 461-501 (VAGATFMAAGGSAPELFTSLIGVFISHSNVGIGTIVGSAVF). Residues 465 to 485 (TFMAAGGSAPELFTSLIGVFI) form a helical membrane-spanning segment. Residues 486–489 (SHSN) are Extracellular-facing. The helical transmembrane segment at 490 to 510 (VGIGTIVGSAVFNILFVIGTC) threads the bilayer. Over 511 to 530 (ALFSREILNLTWWPLFRDVS) the chain is Cytoplasmic. The helical transmembrane segment at 531–551 (FYILDLSMLIVFFLDSFIAWW) threads the bilayer. Position 552 (Glu552) is a topological domain, extracellular. The chain crosses the membrane as a helical span at residues 553–573 (SLLLLLAYALYVFTMKWNKQI). The Cytoplasmic segment spans residues 574-938 (ELWVKEQLSR…SLEWPDSRQK (365 aa)). The disordered stretch occupies residues 598–619 (PSEDAVEENEQQDSKKLKLPSV). Ser625 carries the post-translational modification Phosphoserine. The segment at 650 to 932 (GEARPSKDKQ…ENEEPLSLEW (283 aa)) is disordered. A compositionally biased stretch (polar residues) spans 661 to 675 (SLNQEARVLSQTKAE). At Thr690 the chain carries Phosphothreonine. Over residues 703–715 (QEDDPGCQEDVDE) the composition is skewed to acidic residues. Residues 730-751 (ETETEGKKDEQEGETEAERKED) are compositionally biased toward basic and acidic residues. Composition is skewed to acidic residues over residues 766-782 (GETE…GETE) and 802-820 (QEGE…GETE). The span at 833 to 855 (AESKEVEQERETEAEGKDKHEGQ) shows a compositional bias: basic and acidic residues. 2 stretches are compositionally biased toward acidic residues: residues 870–880 (GETEANAEDQC) and 896–928 (DGGD…EEPL). Residues 939-959 (QAIYLFLLPIVFPLWLTIPDV) form a helical membrane-spanning segment. At 960-966 (RRQESRK) the chain is on the extracellular side. Residues 967–987 (FFVITFLGSIIWIAMFSYLMV) traverse the membrane as a helical segment. Residues 988–1002 (WWAHQVGETIGISEE) lie on the Cytoplasmic side of the membrane. Residues 1003 to 1023 (IMGLTILAAGTSIPDLITSVI) traverse the membrane as a helical segment. The stretch at 1010–1041 (AAGTSIPDLITSVIVARKGLGDMAVSSSVGSN) is one Alpha-2 repeat. Residues 1024 to 1041 (VARKGLGDMAVSSSVGSN) lie on the Extracellular side of the membrane. The chain crosses the membrane as a helical span at residues 1042 to 1062 (IFDITVGLPVPWLLFSLINAL). At 1063–1070 (QPVPVSSN) the chain is on the cytoplasmic side. A helical membrane pass occupies residues 1071 to 1091 (GLFCAIVLLFLMLLFVIFSIA). Residues 1092-1099 (SCKWRMNK) lie on the Extracellular side of the membrane. Residues 1100–1120 (ILGFTMFLLYFVFLVISVMLE) traverse the membrane as a helical segment. Over 1121–1130 (DRIISCPVSV) the chain is Cytoplasmic.

The protein belongs to the Ca(2+):cation antiporter (CaCA) (TC 2.A.19) family. SLC24A subfamily. The uncleaved signal sequence is required for efficient membrane targeting and proper membrane integration and topology.

Its subcellular location is the cell membrane. The enzyme catalyses Ca(2+)(out) + K(+)(out) + 4 Na(+)(in) = Ca(2+)(in) + K(+)(in) + 4 Na(+)(out). Its function is as follows. Calcium, potassium:sodium antiporter that transports 1 Ca(2+) and 1 K(+) in exchange for 4 Na(+). Critical component of the visual transduction cascade, controlling the calcium concentration of outer segments during light and darkness. Light causes a rapid lowering of cytosolic free calcium in the outer segment of both retinal rod and cone photoreceptors and the light-induced lowering of calcium is caused by extrusion via this protein which plays a key role in the process of light adaptation. In Mus musculus (Mouse), this protein is Sodium/potassium/calcium exchanger 1.